Reading from the N-terminus, the 383-residue chain is Succinyl-diaminopimelate desuccinylase (383 aa).

His-74 is a Zn(2+) binding site. Asp-76 is an active-site residue. Asp-107 is a binding site for Zn(2+). Glu-141 functions as the Proton acceptor in the catalytic mechanism. The Zn(2+) site is built by Glu-142, Glu-170, and His-356.

It belongs to the peptidase M20A family. DapE subfamily. As to quaternary structure, homodimer. Requires Zn(2+) as cofactor. It depends on Co(2+) as a cofactor.

It catalyses the reaction N-succinyl-(2S,6S)-2,6-diaminopimelate + H2O = (2S,6S)-2,6-diaminopimelate + succinate. It functions in the pathway amino-acid biosynthesis; L-lysine biosynthesis via DAP pathway; LL-2,6-diaminopimelate from (S)-tetrahydrodipicolinate (succinylase route): step 3/3. Its function is as follows. Catalyzes the hydrolysis of N-succinyl-L,L-diaminopimelic acid (SDAP), forming succinate and LL-2,6-diaminopimelate (DAP), an intermediate involved in the bacterial biosynthesis of lysine and meso-diaminopimelic acid, an essential component of bacterial cell walls. This chain is Succinyl-diaminopimelate desuccinylase, found in Cupriavidus taiwanensis (strain DSM 17343 / BCRC 17206 / CCUG 44338 / CIP 107171 / LMG 19424 / R1) (Ralstonia taiwanensis (strain LMG 19424)).